Reading from the N-terminus, the 465-residue chain is Ubiquitin carboxyl-terminal hydrolase UCH54 (465 aa).

The region spanning 11-333 (EWCLIESNPC…VRFNIIAVMK (323 aa)) is the UCH catalytic domain. The active-site Nucleophile is cysteine 145. Histidine 220 serves as the catalytic Proton donor. Positions 244 to 293 (INADEQNKPNPNNNNNNKDNDNDNNNNNNNNNNNNNNNNNNNNNNNNNNI) are disordered. Residues 251 to 292 (KPNPNNNNNNKDNDNDNNNNNNNNNNNNNNNNNNNNNNNNNN) are compositionally biased toward low complexity. The region spanning 432–460 (NFYPFIMSSLNLMAKHKLLKDAYQKEKLK) is the ULD domain.

This sequence belongs to the peptidase C12 family.

It catalyses the reaction Thiol-dependent hydrolysis of ester, thioester, amide, peptide and isopeptide bonds formed by the C-terminal Gly of ubiquitin (a 76-residue protein attached to proteins as an intracellular targeting signal).. Functionally, thiol protease that recognizes and hydrolyzes a peptide bond at the C-terminal glycine of either ubiquitin or NEDD8. This is Ubiquitin carboxyl-terminal hydrolase UCH54 from Plasmodium falciparum (isolate 3D7).